An 81-amino-acid chain; its full sequence is MKKDIHPEYKKVVFLDTSTNFKFLSGSTKGSDETIEWEDGNTYPLIKVEISSDSHPFYTGKQKADKVGGRVDRFKKKYNLQ.

The protein belongs to the bacterial ribosomal protein bL31 family. Type B subfamily. In terms of assembly, part of the 50S ribosomal subunit.

This Oceanobacillus iheyensis (strain DSM 14371 / CIP 107618 / JCM 11309 / KCTC 3954 / HTE831) protein is Large ribosomal subunit protein bL31B.